We begin with the raw amino-acid sequence, 678 residues long: Probable antibacterial peptide polyprotein (678 aa).

14 repeat units span residues methionine 1–arginine 67, glutamate 68–arginine 114, glutamate 115–arginine 161, glutamate 162–arginine 208, glutamate 209–arginine 255, glutamate 256–arginine 302, glutamate 303–arginine 349, glutamate 350–arginine 396, glutamate 397–arginine 443, glutamate 444–arginine 490, glutamate 491–arginine 537, glutamate 538–arginine 584, glutamate 585–arginine 631, and glutamate 632–arginine 678. The tract at residues methionine 1–arginine 678 is 14 X approximate tandem repeats. Residue threonine 32 is glycosylated (O-linked (GalNAc...) threonine). Disordered regions lie at residues serine 58–leucine 97 and valine 113–arginine 678. The span at proline 64–valine 73 shows a compositional bias: basic and acidic residues. O-linked (GalNAc...) threonine glycosylation is found at threonine 83 and threonine 130. Residues glutamate 145 to leucine 157 are compositionally biased toward low complexity. Basic and acidic residues predominate over residues proline 158–valine 167. Threonine 177 carries O-linked (GalNAc...) threonine glycosylation. The span at valine 188–leucine 204 shows a compositional bias: low complexity. The segment covering proline 205 to valine 214 has biased composition (basic and acidic residues). O-linked (GalNAc...) threonine glycosylation is found at threonine 224 and threonine 271. The segment covering proline 299–valine 308 has biased composition (basic and acidic residues). Threonine 318 is a glycosylation site (O-linked (GalNAc...) threonine). The span at glutamate 333–leucine 345 shows a compositional bias: low complexity. The span at proline 346–valine 355 shows a compositional bias: basic and acidic residues. Threonine 365 carries O-linked (GalNAc...) threonine glycosylation. The segment covering glutamate 380 to leucine 392 has biased composition (low complexity). The span at proline 393–valine 402 shows a compositional bias: basic and acidic residues. Threonine 412 carries an O-linked (GalNAc...) threonine glycan. Residues glutamate 427–leucine 439 are compositionally biased toward low complexity. Residues proline 440–valine 449 are compositionally biased toward basic and acidic residues. O-linked (GalNAc...) threonine glycosylation is present at threonine 459. Over residues glutamate 474–leucine 486 the composition is skewed to low complexity. The segment covering proline 487–valine 496 has biased composition (basic and acidic residues). Threonine 506 carries an O-linked (GalNAc...) threonine glycan. Low complexity predominate over residues glutamate 521–leucine 533. The segment covering proline 534–valine 543 has biased composition (basic and acidic residues). O-linked (GalNAc...) threonine glycosylation occurs at threonine 553. The span at glutamate 568–leucine 580 shows a compositional bias: low complexity. A compositionally biased stretch (basic and acidic residues) spans proline 581–valine 590. An O-linked (GalNAc...) threonine glycan is attached at threonine 600. Over residues glutamate 615–leucine 627 the composition is skewed to low complexity. O-linked (GalNAc...) threonine glycosylation is present at threonine 647.

It localises to the secreted. Functionally, has antibacterial activity in vitro. The sequence is that of Probable antibacterial peptide polyprotein from Riptortus clavatus (Bean bug).